A 402-amino-acid chain; its full sequence is 4-hydroxy-3-methylbut-2-enyl diphosphate reductase (402 aa).

C66 contacts [4Fe-4S] cluster. H96 is a binding site for (2E)-4-hydroxy-3-methylbut-2-enyl diphosphate. H96 is a dimethylallyl diphosphate binding site. An isopentenyl diphosphate-binding site is contributed by H96. C157 contributes to the [4Fe-4S] cluster binding site. H185 contacts (2E)-4-hydroxy-3-methylbut-2-enyl diphosphate. H185 contacts dimethylallyl diphosphate. Isopentenyl diphosphate is bound at residue H185. Residue E187 is the Proton donor of the active site. T250 provides a ligand contact to (2E)-4-hydroxy-3-methylbut-2-enyl diphosphate. C288 contacts [4Fe-4S] cluster. (2E)-4-hydroxy-3-methylbut-2-enyl diphosphate-binding residues include S317, S318, N319, and S379. Positions 317, 318, 319, and 379 each coordinate dimethylallyl diphosphate. 4 residues coordinate isopentenyl diphosphate: S317, S318, N319, and S379.

Belongs to the IspH family. [4Fe-4S] cluster serves as cofactor.

The catalysed reaction is isopentenyl diphosphate + 2 oxidized [2Fe-2S]-[ferredoxin] + H2O = (2E)-4-hydroxy-3-methylbut-2-enyl diphosphate + 2 reduced [2Fe-2S]-[ferredoxin] + 2 H(+). The enzyme catalyses dimethylallyl diphosphate + 2 oxidized [2Fe-2S]-[ferredoxin] + H2O = (2E)-4-hydroxy-3-methylbut-2-enyl diphosphate + 2 reduced [2Fe-2S]-[ferredoxin] + 2 H(+). The protein operates within isoprenoid biosynthesis; dimethylallyl diphosphate biosynthesis; dimethylallyl diphosphate from (2E)-4-hydroxy-3-methylbutenyl diphosphate: step 1/1. It participates in isoprenoid biosynthesis; isopentenyl diphosphate biosynthesis via DXP pathway; isopentenyl diphosphate from 1-deoxy-D-xylulose 5-phosphate: step 6/6. In terms of biological role, catalyzes the conversion of 1-hydroxy-2-methyl-2-(E)-butenyl 4-diphosphate (HMBPP) into a mixture of isopentenyl diphosphate (IPP) and dimethylallyl diphosphate (DMAPP). Acts in the terminal step of the DOXP/MEP pathway for isoprenoid precursor biosynthesis. This is 4-hydroxy-3-methylbut-2-enyl diphosphate reductase from Crocosphaera subtropica (strain ATCC 51142 / BH68) (Cyanothece sp. (strain ATCC 51142)).